The following is a 230-amino-acid chain: Flagellar L-ring protein (230 aa).

The N-terminal stretch at 1–18 (MNRLNIAVSCLATALLFG) is a signal peptide. The N-palmitoyl cysteine moiety is linked to residue Cys-19. Cys-19 carries the S-diacylglycerol cysteine lipid modification.

The protein belongs to the FlgH family. As to quaternary structure, the basal body constitutes a major portion of the flagellar organelle and consists of four rings (L,P,S, and M) mounted on a central rod.

Its subcellular location is the cell outer membrane. The protein localises to the bacterial flagellum basal body. Assembles around the rod to form the L-ring and probably protects the motor/basal body from shearing forces during rotation. The chain is Flagellar L-ring protein from Legionella pneumophila (strain Paris).